Here is a 496-residue protein sequence, read N- to C-terminus: Glutamyl-tRNA(Gln) amidotransferase subunit A (496 aa).

Catalysis depends on charge relay system residues Lys75 and Ser150. Ser174 serves as the catalytic Acyl-ester intermediate.

This sequence belongs to the amidase family. GatA subfamily. Heterotrimer of A, B and C subunits.

The catalysed reaction is L-glutamyl-tRNA(Gln) + L-glutamine + ATP + H2O = L-glutaminyl-tRNA(Gln) + L-glutamate + ADP + phosphate + H(+). Functionally, allows the formation of correctly charged Gln-tRNA(Gln) through the transamidation of misacylated Glu-tRNA(Gln) in organisms which lack glutaminyl-tRNA synthetase. The reaction takes place in the presence of glutamine and ATP through an activated gamma-phospho-Glu-tRNA(Gln). The chain is Glutamyl-tRNA(Gln) amidotransferase subunit A from Burkholderia mallei (strain NCTC 10247).